A 144-amino-acid chain; its full sequence is Large ribosomal subunit protein uL16 (144 aa).

It belongs to the universal ribosomal protein uL16 family. As to quaternary structure, part of the 50S ribosomal subunit.

Its function is as follows. Binds 23S rRNA and is also seen to make contacts with the A and possibly P site tRNAs. The protein is Large ribosomal subunit protein uL16 of Clostridium botulinum (strain Alaska E43 / Type E3).